The sequence spans 194 residues: Imidazoleglycerol-phosphate dehydratase (194 aa).

The protein belongs to the imidazoleglycerol-phosphate dehydratase family.

Its subcellular location is the cytoplasm. It catalyses the reaction D-erythro-1-(imidazol-4-yl)glycerol 3-phosphate = 3-(imidazol-4-yl)-2-oxopropyl phosphate + H2O. It functions in the pathway amino-acid biosynthesis; L-histidine biosynthesis; L-histidine from 5-phospho-alpha-D-ribose 1-diphosphate: step 6/9. In Bacillus pumilus (strain SAFR-032), this protein is Imidazoleglycerol-phosphate dehydratase.